Consider the following 160-residue polypeptide: uncharacterized protein (160 aa).

An HTH marR-type domain is found at 20–152; it reads EREIWVLYMK…VYEGLSILSR (133 aa). Residues 66–89 constitute a DNA-binding region (H-T-H motif); that stretch reads VSDIAEKMGASLSNTTGLLDRLEK.

This is an uncharacterized protein from Bacillus subtilis (strain 168).